The sequence spans 658 residues: Glycogen debranching enzyme (658 aa).

The Nucleophile role is filled by aspartate 336. The active-site Proton donor is glutamate 371. The interval 459-484 (EANGEENRDGTNSNYSDNHGKEGLGG) is disordered.

It belongs to the glycosyl hydrolase 13 family.

It catalyses the reaction Hydrolysis of (1-&gt;6)-alpha-D-glucosidic linkages to branches with degrees of polymerization of three or four glucose residues in limit dextrin.. It functions in the pathway glycan degradation; glycogen degradation. Removes maltotriose and maltotetraose chains that are attached by 1,6-alpha-linkage to the limit dextrin main chain, generating a debranched limit dextrin. This is Glycogen debranching enzyme from Salmonella enteritidis PT4 (strain P125109).